Consider the following 467-residue polypeptide: Putative laccase-16 (467 aa).

Plastocyanin-like domains are found at residues 7-88 (VLGS…PKHG), 98-225 (KEIP…YTDS), and 318-451 (DFPN…KDGK). Positions 22, 24, 67, and 69 each coordinate Cu cation. Cu cation contacts are provided by histidine 368, histidine 371, histidine 373, histidine 430, cysteine 431, histidine 432, histidine 436, and methionine 441.

The protein belongs to the multicopper oxidase family. Cu cation is required as a cofactor.

The protein localises to the secreted. Its subcellular location is the extracellular space. The protein resides in the apoplast. It carries out the reaction 4 hydroquinone + O2 = 4 benzosemiquinone + 2 H2O. Lignin degradation and detoxification of lignin-derived products. The polypeptide is Putative laccase-16 (LAC16) (Oryza sativa subsp. japonica (Rice)).